The following is a 465-amino-acid chain: Ribosomal oxygenase 2 (465 aa).

The JmjC domain occupies 139-271; the sequence is QPQRFKDELW…NSWGDFLLDT (133 aa). Positions 179, 181, and 240 each coordinate Fe cation. S309 carries the phosphoserine modification.

Belongs to the ROX family. MINA53 subfamily. Fe(2+) is required as a cofactor.

It is found in the nucleus. The protein resides in the nucleolus. It carries out the reaction L-histidyl-[ribosomal protein uL15] + 2-oxoglutarate + O2 = (3S)-3-hydroxy-L-histidyl-[ribosomal protein uL15] + succinate + CO2. The enzyme catalyses L-histidyl-[protein] + 2-oxoglutarate + O2 = (3S)-3-hydroxy-L-histidyl-[protein] + succinate + CO2. Oxygenase that can act as both a histone lysine demethylase and a ribosomal histidine hydroxylase. Is involved in the demethylation of trimethylated 'Lys-9' on histone H3 (H3K9me3), leading to an increase in ribosomal RNA expression. Also catalyzes the hydroxylation of 60S ribosomal protein L27a on 'His-39'. May play an important role in cell growth and survival. May be involved in ribosome biogenesis, most likely during the assembly process of pre-ribosomal particles. This chain is Ribosomal oxygenase 2 (RIOX2), found in Pongo abelii (Sumatran orangutan).